A 225-amino-acid polypeptide reads, in one-letter code: Riboflavin kinase (225 aa).

Residues 1–89 form a unknown region; it reads MPDIEYLKKL…SRIFSSEPDT (89 aa). Residues 90–225 are riboflavin kinase; the sequence is LELEGNVLKG…LKKQGMEGQK (136 aa). 99–104 serves as a coordination point for CDP; sequence GLGEGQ. Mg(2+) is bound by residues T128 and N130. T185 and E193 together coordinate FMN. Position 198–201 (198–201) interacts with CDP; sequence VKLR.

This sequence belongs to the archaeal riboflavin kinase family. The cofactor is Mg(2+).

It carries out the reaction riboflavin + CTP = CDP + FMN + H(+). It participates in cofactor biosynthesis; FMN biosynthesis; FMN from riboflavin (CTP route): step 1/1. Its function is as follows. Catalyzes the CTP-dependent phosphorylation of riboflavin (vitamin B2) to form flavin mononucleotide (FMN). This is Riboflavin kinase (ribK) from Methanosarcina mazei (strain ATCC BAA-159 / DSM 3647 / Goe1 / Go1 / JCM 11833 / OCM 88) (Methanosarcina frisia).